A 116-amino-acid chain; its full sequence is uncharacterized protein (116 aa).

The helical transmembrane segment at 89 to 109 (VGFVILILLYILTNPNAIELI) threads the bilayer.

This sequence belongs to the M.jannaschii MJ0023/MJ0349/MJ1072/MJ1074/MJ1107/MJECL16 family.

The protein resides in the membrane. This is an uncharacterized protein from Methanocaldococcus jannaschii (strain ATCC 43067 / DSM 2661 / JAL-1 / JCM 10045 / NBRC 100440) (Methanococcus jannaschii).